Reading from the N-terminus, the 327-residue chain is Beta-ketoacyl-[acyl-carrier-protein] synthase III (327 aa).

Active-site residues include cysteine 114 and histidine 254. The ACP-binding stretch occupies residues 255–259; sequence QANQR. Residue asparagine 284 is part of the active site.

The protein belongs to the thiolase-like superfamily. FabH family. Homodimer.

The protein resides in the cytoplasm. It catalyses the reaction malonyl-[ACP] + acetyl-CoA + H(+) = 3-oxobutanoyl-[ACP] + CO2 + CoA. It participates in lipid metabolism; fatty acid biosynthesis. Its function is as follows. Catalyzes the condensation reaction of fatty acid synthesis by the addition to an acyl acceptor of two carbons from malonyl-ACP. Catalyzes the first condensation reaction which initiates fatty acid synthesis and may therefore play a role in governing the total rate of fatty acid production. Possesses both acetoacetyl-ACP synthase and acetyl transacylase activities. Its substrate specificity determines the biosynthesis of branched-chain and/or straight-chain of fatty acids. The chain is Beta-ketoacyl-[acyl-carrier-protein] synthase III from Levilactobacillus brevis (strain ATCC 367 / BCRC 12310 / CIP 105137 / JCM 1170 / LMG 11437 / NCIMB 947 / NCTC 947) (Lactobacillus brevis).